The primary structure comprises 231 residues: uncharacterized protein (231 aa).

The first 19 residues, 1 to 19 (MKFKFLLTPLLSSVLFLSA), serve as a signal peptide directing secretion. A lipid anchor (N-palmitoyl cysteine) is attached at C20. C20 is lipidated: S-diacylglycerol cysteine.

This sequence belongs to the MG439/MG440 family.

The protein localises to the cell membrane. This is an uncharacterized protein from Mycoplasma pneumoniae (strain ATCC 29342 / M129 / Subtype 1) (Mycoplasmoides pneumoniae).